A 291-amino-acid polypeptide reads, in one-letter code: MSALQWSPHPASLAERLADLAVDALIDEADLSPKPALVDRRGSGAHTDLHLGLMHSSALSLWPTFKWMADAATQFGVVGQPLREALGRLGREGEATMLRTTSGVNTHRGAIWALGLLVTAAALDAQECAPEAICARAGALARIKDRQVLTQNSHGDQVVRRYGVMGAREQAQQGFPAVRLFALPQLQRSRAAGSGEQNARLDALLAIMTTLDDTCVLHRAGIEGLNAMQQGAQRVLYAGGSVSLAGRRALNALDQHLLALNASPGGAADLLAACLFIDGLEPALGPVSRSA.

This sequence belongs to the CitG/MdcB family.

The enzyme catalyses 3'-dephospho-CoA + ATP = 2'-(5''-triphospho-alpha-D-ribosyl)-3'-dephospho-CoA + adenine. Functionally, involved in the formation of 2-(5''-phosphoribosyl)-3'-dephosphocoenzyme-A, the prosthetic group of the acyl-carrier protein of the malonate decarboxylase. The polypeptide is Probable 2-(5''-triphosphoribosyl)-3'-dephosphocoenzyme-A synthase (Pseudomonas syringae pv. syringae (strain B728a)).